The chain runs to 113 residues: Retrotransposon Gag-like protein 8C (113 aa).

Belongs to the FAM127 family.

This is Retrotransposon Gag-like protein 8C from Homo sapiens (Human).